We begin with the raw amino-acid sequence, 89 residues long: Small ribosomal subunit protein uS15 (89 aa).

The interval 1–23 (MTLNTEAKQKIINKHQTHGTDTG) is disordered.

The protein belongs to the universal ribosomal protein uS15 family. Part of the 30S ribosomal subunit. Forms a bridge to the 50S subunit in the 70S ribosome, contacting the 23S rRNA.

Functionally, one of the primary rRNA binding proteins, it binds directly to 16S rRNA where it helps nucleate assembly of the platform of the 30S subunit by binding and bridging several RNA helices of the 16S rRNA. In terms of biological role, forms an intersubunit bridge (bridge B4) with the 23S rRNA of the 50S subunit in the ribosome. This Prochlorococcus marinus (strain SARG / CCMP1375 / SS120) protein is Small ribosomal subunit protein uS15.